The primary structure comprises 522 residues: BAR/IMD domain-containing adapter protein 2-like 2 (522 aa).

Positions 1-239 (MAPEMDQFYR…HSPGLLGPAL (239 aa)) constitute an IMD domain. Disordered stretches follow at residues 220–325 (SEAS…GGGG) and 404–502 (PMSP…GTNP). Phosphoserine is present on residues S231, S272, and S303. A compositionally biased stretch (polar residues) spans 297-317 (RTPSASSLYASSTQRSRSNSF). Residues 324–387 (GGARRVRALV…PEAYVKPVEE (64 aa)) enclose the SH3 domain. The segment covering 443–456 (SQSRSRTPSRVPSR) has biased composition (low complexity). Over residues 457–466 (APSPAPPPLP) the composition is skewed to pro residues. Phosphoserine is present on residues S472 and S475.

In terms of tissue distribution, expressed in the epithelial layer of the intestine and in the kidney.

Its subcellular location is the cell membrane. It is found in the cell junction. It localises to the cytoplasmic vesicle membrane. In terms of biological role, phosphoinositides-binding protein that induces the formation of planar or gently curved membrane structures. Binds to phosphoinositides, including to phosphatidylinositol 4,5-bisphosphate (PtdIns(4,5)P2) headgroups. There seems to be no clear preference for a specific phosphoinositide. This Mus musculus (Mouse) protein is BAR/IMD domain-containing adapter protein 2-like 2 (Baiap2l2).